We begin with the raw amino-acid sequence, 85 residues long: ELKNELKQGYKEKLVDIREEIMRKRRAGKLPGDTASVLKAWWQAHSKWPYPTEDDKARLVQETGLQLKQINNWFINQRKRNWHSN.

The region spanning 1–21 (ELKNELKQGYKEKLVDIREEI) is the ELK domain. The segment at residues 22–85 (MRKRRAGKLP…NQRKRNWHSN (64 aa)) is a DNA-binding region (homeobox; TALE-type).

This sequence belongs to the TALE/KNOX homeobox family. In terms of tissue distribution, expressed in all tissues examined. Highest expression in leaves.

The protein resides in the nucleus. The polypeptide is Homeobox protein knotted-1-like 7 (KNOX7) (Zea mays (Maize)).